We begin with the raw amino-acid sequence, 236 residues long: tRNA1(Val) (adenine(37)-N6)-methyltransferase (236 aa).

Belongs to the methyltransferase superfamily. tRNA (adenine-N(6)-)-methyltransferase family.

The protein localises to the cytoplasm. The catalysed reaction is adenosine(37) in tRNA1(Val) + S-adenosyl-L-methionine = N(6)-methyladenosine(37) in tRNA1(Val) + S-adenosyl-L-homocysteine + H(+). In terms of biological role, specifically methylates the adenine in position 37 of tRNA(1)(Val) (anticodon cmo5UAC). The sequence is that of tRNA1(Val) (adenine(37)-N6)-methyltransferase from Actinobacillus succinogenes (strain ATCC 55618 / DSM 22257 / CCUG 43843 / 130Z).